The chain runs to 702 residues: MNSLFASTARGLEELLKTELENLGAVECQVVQGGVHFKGDTRLVYQSLMWSRLASRIMLPLGECKVYSDLDLYLGVQAINWTEMFNPGATFAVHFSGLNDTIRNSQYGAMKVKDAIVDAFTRKNLPRPNVDRDAPDIRVNVWLHKETASIALDLSGDGLHLRGYRDRAGIAPIKETLAAAIVMRSGWQPGTPLLDPMCGSGTLLIEAAMLATDRAPGLHRGRWGFSGWAQHDEAIWQEVKAEAQTRARKGLAEYSSHFYGSDSDARVIQRARTNARLAGIAELITFEVKDVAQLTNPLLKGPYGTVLSNPPYGERLDSEPALIALHSLLGRIMKNQFGGWNLSLFSASPDLLSCLQLRADKQYKAKNGPLDCVQKNYHVAESTPDSKPAMVAEDYANRLRKNLKKFEKWARQEGIECYRLYDADLPEYNVAVDRYSDWVVVQEYAPPKTIDAHKARQRLFDIIAATISVLGIAPNKLVLKTRERQKGKNQYQKLGEKGEFLEVTEYNAHLWVNLTDYLDTGLFLDHRIARRMLGQMSKGKDFLNLFSYTGSATVHAGLGGARSTTTVDMSRTYLEWAERNLRLNGLTGRAHRLIQADCLAWLREANEQFDLIFIDPPTFSNSKRMEDAFDVQRDHLALMKDLKRLLRAGGTIMFSNNKRGFRMDLDGLAKLGLKAQEITQKTLSQDFARNRQIHNCWLITAA.

One can recognise a THUMP domain in the interval L43–L154.

This sequence belongs to the methyltransferase superfamily. RlmKL family.

The protein resides in the cytoplasm. The enzyme catalyses guanosine(2445) in 23S rRNA + S-adenosyl-L-methionine = N(2)-methylguanosine(2445) in 23S rRNA + S-adenosyl-L-homocysteine + H(+). It catalyses the reaction guanosine(2069) in 23S rRNA + S-adenosyl-L-methionine = N(2)-methylguanosine(2069) in 23S rRNA + S-adenosyl-L-homocysteine + H(+). Specifically methylates the guanine in position 2445 (m2G2445) and the guanine in position 2069 (m7G2069) of 23S rRNA. This Shigella boydii serotype 18 (strain CDC 3083-94 / BS512) protein is Ribosomal RNA large subunit methyltransferase K/L.